The sequence spans 894 residues: Glutamate receptor 3 (894 aa).

An N-terminal signal peptide occupies residues 1–28 (MARQKKMGQSVLRAVFFLVLGLLGHSHG). The Extracellular segment spans residues 29–552 (GFPNTISIGG…GVFSFLDPLA (524 aa)). Residues N63, N266, N380, N415, and N422 are each glycosylated (N-linked (GlcNAc...) asparagine). C91 and C340 are oxidised to a cystine. P508, T510, and R515 together coordinate L-glutamate. A helical transmembrane segment spans residues 553–573 (YEIWMCIVFAYIGVSVVLFLV). Over 574-602 (SRFSPYEWHLEDNNEEPRDPQSPPDPPNE) the chain is Cytoplasmic. Positions 603 to 618 (FGIFNSLWFSLGAFMQ) form an intramembrane region, helical; Pore-forming. The stretch at 619–621 (QGC) is an intramembrane region. C621 carries S-palmitoyl cysteine lipidation. Residues 622 to 627 (DISPRS) lie on the Cytoplasmic side of the membrane. Residues 628 to 648 (LSGRIVGGVWWFFTLIIISSY) form a helical membrane-spanning segment. At 649-823 (TANLAAFLTV…DKTSALSLSN (175 aa)) the chain is on the extracellular side. L-glutamate-binding residues include S686, T687, and E737. A disulfide bond links C750 and C805. Residues 824 to 844 (VAGVFYILVGGLGLAMMVALI) form a helical membrane-spanning segment. Over 845-894 (EFCYKSRAESKRMKLTKNTQNFKPAPATNTQNYATYREGYNVYGTESVKI) the chain is Cytoplasmic. The S-palmitoyl cysteine moiety is linked to residue C847. 2 positions are modified to phosphotyrosine: Y877 and Y887.

This sequence belongs to the glutamate-gated ion channel (TC 1.A.10.1) family. GRIA3 subfamily. Homotetramer or heterotetramer of pore-forming glutamate receptor subunits. Tetramers may be formed by the dimerization of dimers. Interacts with PICK1, GRIP1 and GRIP2. Found in a complex with GRIA1, GRIA2, GRIA4, CNIH2, CNIH3, CACNG2, CACNG3, CACNG4, CACNG5, CACNG7 and CACNG8. Interacts with CACNG5. Found in a complex with GRIA1, GRIA2, GRIA4, DLG4, CACNG8 and CNIH2.

The protein resides in the cell membrane. Its subcellular location is the postsynaptic cell membrane. It localises to the postsynaptic density membrane. The enzyme catalyses Ca(2+)(in) = Ca(2+)(out). In terms of biological role, ionotropic glutamate receptor that functions as a ligand-gated cation channel, gated by L-glutamate and glutamatergic agonists such as alpha-amino-3-hydroxy-5-methyl-4-isoxazolepropionic acid (AMPA), quisqualic acid, and kainic acid. L-glutamate acts as an excitatory neurotransmitter at many synapses in the central nervous system and plays an important role in fast excitatory synaptic transmission by inducing long-term potentiation. Binding of the excitatory neurotransmitter L-glutamate induces a conformation change, leading to the opening of the cation channel, and thereby converts the chemical signal to an electrical impulse upon entry of calcium. The receptor then desensitizes rapidly and enters a transient inactive state, characterized by the presence of bound agonist. In the presence of CACNG8, shows resensitization which is characterized by a delayed accumulation of current flux upon continued application of glutamate. In Homo sapiens (Human), this protein is Glutamate receptor 3.